The sequence spans 112 residues: Chaperone NapD (112 aa).

This sequence belongs to the NapD family. In terms of assembly, interacts with the cytoplasmic NapA precursor.

It is found in the cytoplasm. Chaperone for NapA, the catalytic subunit of the periplasmic nitrate reductase. It binds directly and specifically to the twin-arginine signal peptide of NapA, preventing premature interaction with the Tat translocase and premature export. The polypeptide is Chaperone NapD (Paracoccus pantotrophus (Thiosphaera pantotropha)).